We begin with the raw amino-acid sequence, 215 residues long: Adenylate kinase (215 aa).

10-15 is a binding site for ATP; the sequence is GAGKGT. The interval 30–59 is NMP; it reads STGDMLRAAVKAGTELGLKAKSVMDAGNLV. Residues T31, R36, 57–59, 85–88, and Q92 each bind AMP; these read NLV and GFPR. An LID region spans residues 122–159; sequence GRRVHEGSGRIYHTIFNPPKVEGVDDVTGESLVQRKDD. Residues R123 and 132-133 contribute to the ATP site; that span reads IY. The AMP site is built by R156 and R167. Residue G201 coordinates ATP.

Belongs to the adenylate kinase family. In terms of assembly, monomer.

The protein resides in the cytoplasm. It catalyses the reaction AMP + ATP = 2 ADP. It functions in the pathway purine metabolism; AMP biosynthesis via salvage pathway; AMP from ADP: step 1/1. In terms of biological role, catalyzes the reversible transfer of the terminal phosphate group between ATP and AMP. Plays an important role in cellular energy homeostasis and in adenine nucleotide metabolism. The chain is Adenylate kinase from Pseudomonas syringae pv. tomato (strain ATCC BAA-871 / DC3000).